Consider the following 867-residue polypeptide: GRB2-associated and regulator of MAPK protein 1 (867 aa).

A CABIT region spans residues Asn12–Glu322. Tyr464 bears the Phosphotyrosine mark. Disordered stretches follow at residues Ser511–Glu530, Asp536–Ser594, and Pro735–Ala758. Composition is skewed to polar residues over residues Ser544–Thr554 and Ser569–Leu581. A compositionally biased stretch (basic and acidic residues) spans Lys740–Glu749. In terms of domain architecture, SAM spans Ile802–Met867.

The protein belongs to the GAREM family.

Its function is as follows. Adapter protein that may provide a link between cell surface epidermal growth factor receptor and the MAPK/ERK signaling pathway. May promote cell proliferation. This Danio rerio (Zebrafish) protein is GRB2-associated and regulator of MAPK protein 1 (garem1).